We begin with the raw amino-acid sequence, 209 residues long: Putative cardiolipin synthase (209 aa).

The next 4 helical transmembrane spans lie at 27-47, 82-102, 126-146, and 157-177; these read AFVYVVLSAHANGWGVAILVF, VTVPIVFGLSGIVPWWFVLTL, VTYVGKAATFGFMVGFPTILL, and LLACGWAFLIWGMYAYLWAFV.

The protein belongs to the CDP-alcohol phosphatidyltransferase class-I family.

It is found in the cell membrane. It carries out the reaction a CDP-1,2-diacyl-sn-glycerol + a 1,2-diacyl-sn-glycero-3-phospho-(1'-sn-glycerol) = a cardiolipin + CMP + H(+). It functions in the pathway lipid metabolism; phospholipid metabolism. May catalyze the biosynthesis of cardiolipin from phosphatidylglycerol (PG) and CDP-diacylglycerol. The chain is Putative cardiolipin synthase from Mycobacterium bovis (strain ATCC BAA-935 / AF2122/97).